A 230-amino-acid polypeptide reads, in one-letter code: U2 small nuclear ribonucleoprotein A' (230 aa).

LRR repeat units follow at residues 19 to 40 (KDRE…PFFP), 41 to 62 (RLRM…LANS), and 65 to 86 (GLTT…DPLR). The 39-residue stretch at 99–137 (NPVTRKEYYRLWIIWRIPSVRFLDYQKVKDAERAKAAEL) folds into the LRRCT domain. Residues 211-230 (GRIPGGALDGAGNDGDQMQL) are disordered. Positions 213 to 223 (IPGGALDGAGN) are enriched in gly residues.

It belongs to the U2 small nuclear ribonucleoprotein A family. As to quaternary structure, associated with the spliceosome.

The protein localises to the nucleus. Functionally, involved in pre-mRNA splicing. The polypeptide is U2 small nuclear ribonucleoprotein A' (lea1) (Emericella nidulans (strain FGSC A4 / ATCC 38163 / CBS 112.46 / NRRL 194 / M139) (Aspergillus nidulans)).